We begin with the raw amino-acid sequence, 49 residues long: L-amino-acid oxidase (49 aa).

43–44 (MS) serves as a coordination point for FAD.

It belongs to the flavin monoamine oxidase family. FIG1 subfamily. In terms of assembly, homodimer; non-covalently linked. The cofactor is FAD. Post-translationally, N-glycosylated. Expressed by the venom gland.

The protein localises to the secreted. The enzyme catalyses an L-alpha-amino acid + O2 + H2O = a 2-oxocarboxylate + H2O2 + NH4(+). It carries out the reaction L-leucine + O2 + H2O = 4-methyl-2-oxopentanoate + H2O2 + NH4(+). Catalyzes an oxidative deamination of predominantly hydrophobic and aromatic L-amino acids, thus producing hydrogen peroxide that may contribute to the diverse toxic effects of this enzyme. Shows activity on L-Leu. Exhibits diverse biological activities, such as hemorrhage, hemolysis, edema, antibacterial and antiparasitic activities, as well as regulation of platelet aggregation. Its effect on platelets is controversial, since it either induces aggregation or inhibits agonist-induced aggregation. These different effects are probably due to different experimental conditions. In addition, this protein induces apoptosis and necrosis and has inhibitory effects on rat kidney function (decrease of blood flow and glomerular filtration). This Bothrops insularis (Golden lancehead) protein is L-amino-acid oxidase.